The primary structure comprises 380 residues: Cytochrome b (380 aa).

The next 4 membrane-spanning stretches (helical) occupy residues 34–54, 78–99, 114–134, and 179–199; these read FGSL…LLAM, WLIR…YLHI, WNTG…GYVL, and FFAL…IHLT. His-84 and His-98 together coordinate heme b. Heme b-binding residues include His-183 and His-197. His-202 is an a ubiquinone binding site. Helical transmembrane passes span 227 to 247, 289 to 309, 321 to 341, and 348 to 368; these read LKDA…ALFS, LGGV…PLLH, LSQL…WIGS, and FIII…ILFP.

Belongs to the cytochrome b family. In terms of assembly, the cytochrome bc1 complex contains 11 subunits: 3 respiratory subunits (MT-CYB, CYC1 and UQCRFS1), 2 core proteins (UQCRC1 and UQCRC2) and 6 low-molecular weight proteins (UQCRH/QCR6, UQCRB/QCR7, UQCRQ/QCR8, UQCR10/QCR9, UQCR11/QCR10 and a cleavage product of UQCRFS1). This cytochrome bc1 complex then forms a dimer. Heme b serves as cofactor.

Its subcellular location is the mitochondrion inner membrane. Component of the ubiquinol-cytochrome c reductase complex (complex III or cytochrome b-c1 complex) that is part of the mitochondrial respiratory chain. The b-c1 complex mediates electron transfer from ubiquinol to cytochrome c. Contributes to the generation of a proton gradient across the mitochondrial membrane that is then used for ATP synthesis. The protein is Cytochrome b (MT-CYB) of Oceanodroma tethys (Wedge-rumped storm-petrel).